The chain runs to 143 residues: Putative transmembrane protein ORF32 (143 aa).

Transmembrane regions (helical) follow at residues 20–42 and 52–74; these read GISGMLRLAMLGLTGVSTMSFTL and WPLIGAMCVGTLLFAYYYTEGGV.

It is found in the host membrane. In Haloarcula hispanica (His1V), this protein is Putative transmembrane protein ORF32.